The sequence spans 288 residues: MATATLDKAALSRLFTDYSLEITPKDVEALENAAHMIPPGTLISVTFLPGAEYEDRARAAKRIQELGFRPVPHLSARRLIDEADLRTYLDMLKGVIDLKHVFVIAGDPNEPLGIYEDALALIDSGILKEYGIEHCGISGYPEGHPDITDEKLAKAMHDKVASLKRQGIDYSIMTQFGFDAEPVLEWLKQIRSEGIDGPVRIGLAGPASIKTLLRFAARCGVGTSAKVVKKYGLSITSLIGSAGPDPVIEDLTPVLGPEHGQVHLHFYPFGGLVKTNEWIVNFKGKQGI.

8 residues coordinate FAD: Ala51, His73, Gly106, Asp107, Ala118, Tyr140, His144, and Lys159. Asp107 is a binding site for (6S)-5-methyl-5,6,7,8-tetrahydrofolate. Gln175 contributes to the (6S)-5-methyl-5,6,7,8-tetrahydrofolate binding site. Gln175 serves as a coordination point for NADH.

It belongs to the methylenetetrahydrofolate reductase family. Requires FAD as cofactor.

It carries out the reaction (6S)-5-methyl-5,6,7,8-tetrahydrofolate + NAD(+) = (6R)-5,10-methylene-5,6,7,8-tetrahydrofolate + NADH + H(+). The protein operates within one-carbon metabolism; tetrahydrofolate interconversion. It functions in the pathway amino-acid biosynthesis; L-methionine biosynthesis via de novo pathway. Catalyzes the NADH-dependent reduction of 5,10-methylenetetrahydrofolate to 5-methyltetrahydrofolate. Is required to provide the methyl group necessary for methionine synthetase to convert homocysteine to methionine; the methyl group is given by 5-methyltetrahydrofolate. Is required for Sphingobium SYK-6 to grow on vanillate or syringate as the sole source of carbon. This Sphingobium sp. (strain NBRC 103272 / SYK-6) protein is 5,10-methylenetetrahydrofolate reductase.